A 302-amino-acid polypeptide reads, in one-letter code: MGPTACGKSQLAICLRKYLSIELISVDSALIYRGMDIGTDKPSFSDLYNHPHRLLNIKDPVENYSAAEFQKDVLREIDEIIKLGKIPCLVGGSMFYYNVLLHGLSILPPSNIKLREYLIQKSYEKNYLYKKLKLIDPISASRIHKNDFQRLIRALEIFYLSGKSLTELKKKNNYKLPYNIFQFAIIPPNKEWLNNKIELRIKKMLMLGFQKEVEILFLRGDLHKNLPSIRCIGYRQMWEYLEYKNSYKDMFNKTIHATRKLAKHQLTWLKNWKNINKIEYHSTSTILAKKVLDVLEKNDFSV.

2 to 9 (GPTACGKS) is a binding site for ATP. A substrate-binding site is contributed by 4–9 (TACGKS). Interaction with substrate tRNA regions lie at residues 27–30 (DSAL) and 149–153 (QRLIR).

It belongs to the IPP transferase family. As to quaternary structure, monomer. Mg(2+) is required as a cofactor.

The enzyme catalyses adenosine(37) in tRNA + dimethylallyl diphosphate = N(6)-dimethylallyladenosine(37) in tRNA + diphosphate. Its function is as follows. Catalyzes the transfer of a dimethylallyl group onto the adenine at position 37 in tRNAs that read codons beginning with uridine, leading to the formation of N6-(dimethylallyl)adenosine (i(6)A). In Buchnera aphidicola subsp. Acyrthosiphon pisum (strain 5A), this protein is tRNA dimethylallyltransferase.